The primary structure comprises 277 residues: Intercellular adhesion molecule 2 (277 aa).

The N-terminal stretch at 1–22 (MSSFACWSLSLLILFYSPGSGE) is a signal peptide. The Extracellular portion of the chain corresponds to 23-222 (KAFEVYIWSE…EVYEPMQDNQ (200 aa)). Ig-like C2-type domains are found at residues 39-98 (TESW…CSGK) and 127-196 (GEDF…LDLR). 5 N-linked (GlcNAc...) asparagine glycosylation sites follow: Asn45, Asn82, Asn158, Asn176, and Asn186. Cystine bridges form between Cys46/Cys91, Cys50/Cys95, and Cys134/Cys189. The helical transmembrane segment at 223–247 (MVIIIVVVSILLFLFVTSVLLCFIF) threads the bilayer. Residues 248 to 277 (GQHWHRRRTGTYGVLAAWRRLPRAFRARPV) are Cytoplasmic-facing. Residues 250–277 (HWHRRRTGTYGVLAAWRRLPRAFRARPV) are required for interaction with EZR, MSN and RDX and co-localization to microvilli.

This sequence belongs to the immunoglobulin superfamily. ICAM family. As to quaternary structure, interacts with RDX, EZR and MSN. As to expression, expressed in endothelial cells and leukocytes. High levels found in lung.

The protein resides in the membrane. The protein localises to the cell projection. It localises to the microvillus. Functionally, ICAM proteins are ligands for the leukocyte adhesion protein LFA-1 (integrin alpha-L/beta-2). ICAM2 may play a role in lymphocyte recirculation by blocking LFA-1-dependent cell adhesion. It mediates adhesive interactions important for antigen-specific immune response, NK-cell mediated clearance, lymphocyte recirculation, and other cellular interactions important for immune response and surveillance. This is Intercellular adhesion molecule 2 (Icam2) from Mus musculus (Mouse).